The sequence spans 147 residues: uncharacterized protein (147 aa).

Residues 52–145 enclose the Rhodanese domain; it reads YDRCLLIIDA…WLSNNYPTVC (94 aa).

This is an uncharacterized protein from Buchnera aphidicola subsp. Baizongia pistaciae (strain Bp).